We begin with the raw amino-acid sequence, 514 residues long: 2,3-bisphosphoglycerate-independent phosphoglycerate mutase (514 aa).

Mn(2+)-binding residues include D12 and S62. S62 serves as the catalytic Phosphoserine intermediate. Residues H123, 153 to 154 (RD), R185, R191, 260 to 263 (RPDR), and K335 each bind substrate. The Mn(2+) site is built by D402, H406, D443, H444, and H462.

This sequence belongs to the BPG-independent phosphoglycerate mutase family. In terms of assembly, monomer. It depends on Mn(2+) as a cofactor.

The enzyme catalyses (2R)-2-phosphoglycerate = (2R)-3-phosphoglycerate. It functions in the pathway carbohydrate degradation; glycolysis; pyruvate from D-glyceraldehyde 3-phosphate: step 3/5. Functionally, catalyzes the interconversion of 2-phosphoglycerate and 3-phosphoglycerate. This Lachnoclostridium phytofermentans (strain ATCC 700394 / DSM 18823 / ISDg) (Clostridium phytofermentans) protein is 2,3-bisphosphoglycerate-independent phosphoglycerate mutase.